A 301-amino-acid chain; its full sequence is Probable alpha-L-glutamate ligase (301 aa).

In terms of domain architecture, ATP-grasp spans 104–287; it reads HQLLAAQGID…VAIKIVHHVE (184 aa). Residues lysine 141, 178-179, aspartate 187, and 211-213 contribute to the ATP site; these read EF and RSN. Mg(2+)-binding residues include aspartate 248, glutamate 260, and asparagine 262. Mn(2+)-binding residues include aspartate 248, glutamate 260, and asparagine 262.

It belongs to the RimK family. Mg(2+) is required as a cofactor. Requires Mn(2+) as cofactor.

This chain is Probable alpha-L-glutamate ligase, found in Xylella fastidiosa (strain M12).